The following is a 385-amino-acid chain: Transcription factor-like protein DPB (385 aa).

Disordered regions lie at residues 1–53 (MTTT…EQTI) and 71–102 (DIQG…KTGR). A compositionally biased stretch (polar residues) spans 22-31 (PSTRSWGTAV). Residues 32-53 (SGQSVSTSGSMGSPSSRSEQTI) are compositionally biased toward low complexity. A DNA-binding region spans residues 101–184 (GRGLRQFSMK…KKEIQWRGLP (84 aa)). A DEF box motif is present at residues 150–184 (DEKNIRRRVYDALNVLMAMDIISKDKKEIQWRGLP). A coiled-coil region spans residues 185 to 234 (RTSLSDIEELKNERLSLRNRIEKKTAYSQELEEQYVGLQNLIQRNEHLYS). The disordered stretch occupies residues 296–385 (PPQQPNGRNN…IMNSSMKPEN (90 aa)). The span at 300–327 (PNGRNNSQLVCHNFTPENPNKGPSTGPT) shows a compositional bias: polar residues. The segment covering 336–349 (HLQSQQHQQHSQLQ) has biased composition (low complexity). Over residues 355–364 (ETNNVTSSAD) the composition is skewed to polar residues.

The protein belongs to the E2F/DP family. In terms of assembly, heterodimer with non-phosphorylated E2FC. No interaction with phosphorylated E2FC. Interacts preferentially with E2FC, but also with E2FA and E2FB. Interacts with SKP2A. Targeted for proteasomal degradation by the SCF(SKP2A) E3 ubiquitin ligase complex. Phosphorylated. As to expression, ubiquitous.

Its subcellular location is the nucleus. It is found in the cytoplasm. In terms of biological role, involved in the regulation of the G1/S transition. Increases the DNA binding activity of E2F proteins after heterodimerization. The complex DPB/E2FC restricts cell division and lateral root initiation and may function as a negative regulator of E2F-regulated genes. The interaction with SKP2A is controlled by auxin. The chain is Transcription factor-like protein DPB (DPB) from Arabidopsis thaliana (Mouse-ear cress).